Consider the following 318-residue polypeptide: Cell surface sensor SHO1 (318 aa).

The disordered stretch occupies residues 1-23 (MPSYGSLHSPSLRKMEHSRGQYG). Topologically, residues 1–38 (MPSYGSLHSPSLRKMEHSRGQYGGGRKGMSLGNVIGDP) are cytoplasmic. Residues 39–59 (FALATISIAGLAWLIAFIASI) traverse the membrane as a helical segment. Residues 60–71 (VAQIQTTQGFPT) are Extracellular-facing. A helical transmembrane segment spans residues 72 to 92 (YTWWTVVFYFFLIPGVFVVVA). The Cytoplasmic segment spans residues 93–100 (SDTIQTYH). The chain crosses the membrane as a helical span at residues 101 to 121 (VALVGYMACGLVLTTSSVNGL). Residues 122 to 130 (VYSTNGAKE) are Extracellular-facing. The chain crosses the membrane as a helical span at residues 131-151 (AAAAGFILLSMVTIVWIFYFG). Topologically, residues 152-318 (SAPSAMPRAY…IAPSNYLILL (167 aa)) are cytoplasmic. The interval 172–255 (TSNNRQTMTG…AGGAADAEIV (84 aa)) is disordered. Over residues 190-214 (ETSTSVQPPQMYTSAQLNGFENPSP) the composition is skewed to polar residues. Residues 237 to 250 (GLPKTTTPPAGGAA) show a composition bias toward low complexity. The 60-residue stretch at 259–318 (EYPYRAKAIYTYEANPDDANEISFSKHEILEVSDVSGRWWQARKETGETGIAPSNYLILL) folds into the SH3 domain.

It belongs to the SHO1 family. In terms of assembly, forms homooligomers.

The protein resides in the cell membrane. In terms of biological role, MSB2 and SHO1 have overlapping functions in recognizing various surface signals for MAPK PMK1 activation and appressorium formation. While MSB2 is critical for sensing surface hydrophobicity and cutin monomers, SHO1 may play a more important role in recognizing rice leaf waxes. The sequence is that of Cell surface sensor SHO1 from Pyricularia oryzae (strain 70-15 / ATCC MYA-4617 / FGSC 8958) (Rice blast fungus).